The primary structure comprises 340 residues: Uroporphyrinogen decarboxylase (340 aa).

Substrate-binding positions include 21–25, Phe40, Asp71, Tyr147, Ser202, and His316; that span reads RQAGR.

This sequence belongs to the uroporphyrinogen decarboxylase family. As to quaternary structure, homodimer.

Its subcellular location is the cytoplasm. The enzyme catalyses uroporphyrinogen III + 4 H(+) = coproporphyrinogen III + 4 CO2. It participates in porphyrin-containing compound metabolism; protoporphyrin-IX biosynthesis; coproporphyrinogen-III from 5-aminolevulinate: step 4/4. Functionally, catalyzes the decarboxylation of four acetate groups of uroporphyrinogen-III to yield coproporphyrinogen-III. The polypeptide is Uroporphyrinogen decarboxylase (Helicobacter hepaticus (strain ATCC 51449 / 3B1)).